A 396-amino-acid polypeptide reads, in one-letter code: Alanine racemase (396 aa).

K46 (proton acceptor; specific for D-alanine) is an active-site residue. Position 46 is an N6-(pyridoxal phosphate)lysine (K46). Position 145 (R145) interacts with substrate. Catalysis depends on Y280, which acts as the Proton acceptor; specific for L-alanine. M328 contributes to the substrate binding site.

This sequence belongs to the alanine racemase family. Pyridoxal 5'-phosphate serves as cofactor.

It carries out the reaction L-alanine = D-alanine. The protein operates within amino-acid biosynthesis; D-alanine biosynthesis; D-alanine from L-alanine: step 1/1. In terms of biological role, catalyzes the interconversion of L-alanine and D-alanine. May also act on other amino acids. The chain is Alanine racemase (alr) from Brucella canis (strain ATCC 23365 / NCTC 10854 / RM-666).